Here is a 287-residue protein sequence, read N- to C-terminus: MAHLFKEKSNCYFCFRCLESPVYLNCGYICCLKCLDSLEKSPEGDGVLCPTCSVVSLKEDIIHAKQLGALVTKIKNLEPQLNFILTMDQGMKIFQVTMTLDVDTAQNHLIISDDLLSVYYTPQKQARKKCAERFHPSPCVLGSSRFTSGRHYWEVVVGTSKEWDIGICKESINRKKAIHLSEKNGFWTVGVRAKKVYSASTDPLTVLRVNPRLRRVGIFLDMLEKSVSFWDLSDGSHIYTFLEIPDTDPFRPFFSPASSYPDGDQEQVLSICPVTNPGIFGIPVNPQ.

The RING-type; degenerate zinc finger occupies 11-53; sequence CYFCFRCLESPVYLNCGYICCLKCLDSLEKSPEGDGVLCPTCS. Residues 78–278 form the B30.2/SPRY domain; that stretch reads EPQLNFILTM…LSICPVTNPG (201 aa).

Interacts with PSMB1, UBE2A and CCNB1. In terms of tissue distribution, expressed in the ovaries and oocytes (at protein level). Expression restricted to gonads. In testis, present at later stages of spermatogeneis and abundant in elongating spermatids.

Its subcellular location is the cytoplasm. It localises to the nucleus. This chain is Ret finger protein-like 4A (Rfpl4a), found in Mus musculus (Mouse).